Consider the following 548-residue polypeptide: Luciferin 4-monooxygenase (548 aa).

The Microbody targeting signal motif lies at 546–548 (AKM).

This sequence belongs to the ATP-dependent AMP-binding enzyme family. In terms of assembly, homodimer. The cofactor is Mg(2+).

Its subcellular location is the peroxisome. The catalysed reaction is firefly D-luciferin + ATP + O2 = firefly oxyluciferin + hnu + AMP + CO2 + diphosphate. With respect to regulation, inhibited by ATP analogs and sodium deoxycholate. Activated by choline-containing phospholipids. Produces green light with a wavelength of 570 nm. This is Luciferin 4-monooxygenase from Luciola mingrelica (Southern Russian firefly).